The sequence spans 327 residues: DNA-directed RNA polymerase subunit alpha (327 aa).

Residues 1-231 (MIYQMQMPAK…DHIMYFANFS (231 aa)) form an alpha N-terminal domain (alpha-NTD) region. An alpha C-terminal domain (alpha-CTD) region spans residues 247–327 (DEFESMRKLL…GMDITRYQMK (81 aa)).

The protein belongs to the RNA polymerase alpha chain family. In terms of assembly, homodimer. The RNAP catalytic core consists of 2 alpha, 1 beta, 1 beta' and 1 omega subunit. When a sigma factor is associated with the core the holoenzyme is formed, which can initiate transcription.

It carries out the reaction RNA(n) + a ribonucleoside 5'-triphosphate = RNA(n+1) + diphosphate. DNA-dependent RNA polymerase catalyzes the transcription of DNA into RNA using the four ribonucleoside triphosphates as substrates. The chain is DNA-directed RNA polymerase subunit alpha from Chlorobium phaeobacteroides (strain DSM 266 / SMG 266 / 2430).